We begin with the raw amino-acid sequence, 177 residues long: DELTA-stichotoxin-Hcr4b (177 aa).

Positions 3–12 (ALAGTITLGA) are plays an important role in the hemolytic activity. An N-terminal region region spans residues 11–30 (GASLGFQILDKVLGELGKVS). Phosphocholine is bound by residues Ser54, Val87, Ser105, Pro107, Tyr133, Tyr137, and Tyr138. Positions 105 to 120 (SVPFDYNLYSNWWDVK) are trp-rich region, which is important for the binding to lipid membrane.

The protein belongs to the actinoporin family. Sea anemone subfamily. Octamer or nonamer in membranes. Monomer in the soluble state.

It localises to the secreted. It is found in the nematocyst. The protein localises to the target cell membrane. In terms of biological role, pore-forming protein that forms cations-selective hydrophilic pores of around 1 nm and causes cardiac stimulation and cytolysis. Pore formation is a multi-step process that involves specific recognition of membrane sphingomyelin (but neither cholesterol nor phosphatidylcholine) using aromatic rich region and adjacent phosphocholine (POC) binding site, firm binding to the membrane (mainly driven by hydrophobic interactions) accompanied by the transfer of the N-terminal region to the lipid-water interface and finally pore formation after oligomerization of monomers. Cytolytic effects include red blood cells hemolysis, platelet aggregation and lysis, cytotoxic and cytostatic effects on fibroblasts. Lethality in mammals has been ascribed to severe vasospasm of coronary vessels, cardiac arrhythmia, and inotropic effects. Preincubation with exogenous sphingomyeline causes complete loss of hemolytic activity. This is DELTA-stichotoxin-Hcr4b from Radianthus crispa (Leathery sea anemone).